The sequence spans 92 residues: Translation initiation factor IF-1 (92 aa).

The S1-like domain maps to 1 to 72 (MAKEELIQFE…EKGRLIFRHK (72 aa)). Positions 69 to 92 (FRHKDERPGGPPRSGPPRGQFRRR) are disordered.

This sequence belongs to the IF-1 family. Component of the 30S ribosomal translation pre-initiation complex which assembles on the 30S ribosome in the order IF-2 and IF-3, IF-1 and N-formylmethionyl-tRNA(fMet); mRNA recruitment can occur at any time during PIC assembly.

It is found in the cytoplasm. In terms of biological role, one of the essential components for the initiation of protein synthesis. Stabilizes the binding of IF-2 and IF-3 on the 30S subunit to which N-formylmethionyl-tRNA(fMet) subsequently binds. Helps modulate mRNA selection, yielding the 30S pre-initiation complex (PIC). Upon addition of the 50S ribosomal subunit IF-1, IF-2 and IF-3 are released leaving the mature 70S translation initiation complex. The protein is Translation initiation factor IF-1 of Rhodopseudomonas palustris (strain ATCC BAA-98 / CGA009).